We begin with the raw amino-acid sequence, 715 residues long: MTTTSAFMLNVRLDNVAVVAIDVPGEKVNTLKAEFAAQVRAILKQIRENKALQGVVFISAKADNFIAGADINMIGHCQNAQEAETLARQGQQLMAEIQALPVPVIAAIHGACLGGGLEMALACHRRICTDDVKTVLGLPEVQLGLLPGSGGTQRLPRLVGVSTALDMILTGKQLRARQALKAGLVDDVVPQTILLEAAVELAKKERLAQRTLPVRERILAGPLGRALLFRLVRKKTAQKTQGNYPATERIIDVIETGLAQGSSSGYDAEARAFGELAMTPQSQALRAVFFASTEVKKDPGSDAPPGPLNSVGILGGGLMGGGIAWVTACKGGLPVRIKDINTQGINHALKYSWDLLETKVRRRHIKANERDKQLALISGSTDYRGFSHRDLVIEAVFEDLPLKQQMVAEVEQNCAAHTIFASNTSSLPIGDIAANAARPEQVIGLHFFSPVEKMPLVEVIPHASTSAQTIATTVKLAKKQGKTPIVVSDKAGFYVNRILAPYINEAIRMLTEGERVEHIDAALVKFGFPVGPIQLLDEVGIDTGTKIIPVLEAAYGERFSAPANVVASILNDDRKGRKNGRGFYLYGEKGRKSKKQVDPAIYKLIGVQGQSRLSAQQVAERCVMLMLNEAARCFDEKVIRSARDGDIGAVFGIGFPPFLGGPFRYMDALGPGEMVATLQRLAALYGPRYAPCEQLVRMAERREHFWTNGETDQGN.

Residues Met1–Pro190 form an enoyl-CoA hydratase region. A 3-hydroxyacyl-CoA dehydrogenase region spans residues Gly306–Asn715.

This sequence in the N-terminal section; belongs to the enoyl-CoA hydratase/isomerase family. It in the central section; belongs to the 3-hydroxyacyl-CoA dehydrogenase family. Heterotetramer of two alpha chains (FadJ) and two beta chains (FadI).

It localises to the cytoplasm. It carries out the reaction a (3S)-3-hydroxyacyl-CoA = a (2E)-enoyl-CoA + H2O. The enzyme catalyses a 4-saturated-(3S)-3-hydroxyacyl-CoA = a (3E)-enoyl-CoA + H2O. It catalyses the reaction a (3S)-3-hydroxyacyl-CoA + NAD(+) = a 3-oxoacyl-CoA + NADH + H(+). The catalysed reaction is (3S)-3-hydroxybutanoyl-CoA = (3R)-3-hydroxybutanoyl-CoA. The protein operates within lipid metabolism; fatty acid beta-oxidation. Functionally, catalyzes the formation of a hydroxyacyl-CoA by addition of water on enoyl-CoA. Also exhibits 3-hydroxyacyl-CoA epimerase and 3-hydroxyacyl-CoA dehydrogenase activities. In Salmonella enteritidis PT4 (strain P125109), this protein is Fatty acid oxidation complex subunit alpha.